We begin with the raw amino-acid sequence, 569 residues long: ATP-dependent RNA helicase dhh1 (569 aa).

Residues 1–16 (MSDQLADQLKATSLSS) are compositionally biased toward polar residues. The tract at residues 1–39 (MSDQLADQLKATSLSSGPEDWKKGLNLPARDTRQQTEDV) is disordered. The short motif at 45-73 (LDWEDFIHDRDLLMGIFEAGFEKPSPIQE) is the Q motif element. Positions 76–246 (IPVALTGRDI…DKNMTSPYEI (171 aa)) constitute a Helicase ATP-binding domain. 89-96 (AKNGTGKT) contacts ATP. The short motif at 194–197 (DEAD) is the DEAD box element. The Helicase C-terminal domain occupies 256 to 416 (GITQYYAFVE…PIPQTIDKSL (161 aa)). Residues 436-569 (AQQPQQQLQQ…GQPQGPLSAQ (134 aa)) form a disordered region. The span at 437–482 (QQPQQQLQQSQRPQQSQQQQHFSTQTQPSNQLPPQQGNQQLGFNPQ) shows a compositional bias: low complexity. Positions 495 to 520 (GDWQGQNGRQNGTGASNNQPRPTNYQ) are enriched in polar residues. Over residues 529–542 (SRGGRGRGFQGQGG) the composition is skewed to gly residues. Over residues 543–569 (RQNQNYGGQRGPRTQGQGQPQGPLSAQ) the composition is skewed to low complexity.

The protein belongs to the DEAD box helicase family. DDX6/DHH1 subfamily.

Its subcellular location is the cytoplasm. It is found in the P-body. The catalysed reaction is ATP + H2O = ADP + phosphate + H(+). Functionally, ATP-dependent RNA helicase involved in mRNA turnover, and more specifically in mRNA decapping. Is involved in G1/S DNA-damage checkpoint recovery, probably through the regulation of the translational status of a subset of mRNAs. May also have a role in translation and mRNA nuclear export. The sequence is that of ATP-dependent RNA helicase dhh1 (drh-10) from Neurospora crassa (strain ATCC 24698 / 74-OR23-1A / CBS 708.71 / DSM 1257 / FGSC 987).